The primary structure comprises 228 residues: 7-cyano-7-deazaguanine synthase (228 aa).

9 to 19 serves as a coordination point for ATP; sequence LSGGPDSTTVL. Zn(2+) is bound by residues C193, C203, C206, and C209.

It belongs to the QueC family. It depends on Zn(2+) as a cofactor.

It carries out the reaction 7-carboxy-7-deazaguanine + NH4(+) + ATP = 7-cyano-7-deazaguanine + ADP + phosphate + H2O + H(+). The protein operates within purine metabolism; 7-cyano-7-deazaguanine biosynthesis. Catalyzes the ATP-dependent conversion of 7-carboxy-7-deazaguanine (CDG) to 7-cyano-7-deazaguanine (preQ(0)). This chain is 7-cyano-7-deazaguanine synthase, found in Rickettsia conorii (strain ATCC VR-613 / Malish 7).